Reading from the N-terminus, the 50-residue chain is Protein hunchback (50 aa).

3 C2H2-type zinc fingers span residues 1-5 (HLRNH), 11-33 (FKCG…MKSH), and 39-50 (YRCANCCYATKY).

The protein belongs to the hunchback C2H2-type zinc-finger protein family.

The protein resides in the nucleus. Its function is as follows. Gap class segmentation protein that controls development of head structures. This Pholcus phalangioides (Longbodied cellar spider) protein is Protein hunchback (hb).